The chain runs to 303 residues: UDP-3-O-acyl-N-acetylglucosamine deacetylase (303 aa).

Residues histidine 78, histidine 237, and aspartate 241 each contribute to the Zn(2+) site. Catalysis depends on histidine 264, which acts as the Proton donor.

The protein belongs to the LpxC family. Zn(2+) is required as a cofactor.

It carries out the reaction a UDP-3-O-[(3R)-3-hydroxyacyl]-N-acetyl-alpha-D-glucosamine + H2O = a UDP-3-O-[(3R)-3-hydroxyacyl]-alpha-D-glucosamine + acetate. Its pathway is glycolipid biosynthesis; lipid IV(A) biosynthesis; lipid IV(A) from (3R)-3-hydroxytetradecanoyl-[acyl-carrier-protein] and UDP-N-acetyl-alpha-D-glucosamine: step 2/6. Catalyzes the hydrolysis of UDP-3-O-myristoyl-N-acetylglucosamine to form UDP-3-O-myristoylglucosamine and acetate, the committed step in lipid A biosynthesis. In Pseudomonas entomophila (strain L48), this protein is UDP-3-O-acyl-N-acetylglucosamine deacetylase.